Here is a 21-residue protein sequence, read N- to C-terminus: S-layer protein 2 (21 aa).

The protein resides in the secreted. It is found in the cell wall. The protein localises to the S-layer. In terms of biological role, the S-layer is a paracrystalline mono-layered assembly of proteins which coat the surface of bacteria. The polypeptide is S-layer protein 2 (Bacillus thuringiensis subsp. konkukian).